The following is an 831-amino-acid chain: Vi polysaccharide biosynthesis protein TviD (831 aa).

It functions in the pathway glycan metabolism; Vi-antigen biosynthesis. The protein operates within capsule biogenesis; capsule polysaccharide biosynthesis. In terms of biological role, may be required for maturation of the Vi polysaccharide. The polypeptide is Vi polysaccharide biosynthesis protein TviD (tviD) (Salmonella typhi).